The chain runs to 269 residues: Small ribosomal subunit protein uS2 (269 aa).

A disordered region spans residues 228 to 269 (ARAERQAAAAKDAAGDTGKSEADAEAVKAEAAAEEKAETTEA). The segment covering 233–244 (QAAAAKDAAGDT) has biased composition (low complexity). Positions 245 to 269 (GKSEADAEAVKAEAAAEEKAETTEA) are enriched in basic and acidic residues.

Belongs to the universal ribosomal protein uS2 family.

The polypeptide is Small ribosomal subunit protein uS2 (Corynebacterium urealyticum (strain ATCC 43042 / DSM 7109)).